The primary structure comprises 123 residues: PTS-dependent dihydroxyacetone kinase, phosphotransferase subunit DhaM (123 aa).

In terms of domain architecture, PTS EIIA type-4 spans 2–123 (TYGIVIVSHS…EQLEKMLIEK (122 aa)). The Tele-phosphohistidine intermediate; for EIIA activity role is filled by histidine 10.

In terms of assembly, homodimer. The dihydroxyacetone kinase complex is composed of a homodimer of DhaM, a homodimer of DhaK and the subunit DhaL.

The catalysed reaction is dihydroxyacetone + phosphoenolpyruvate = dihydroxyacetone phosphate + pyruvate. The protein operates within polyol metabolism; glycerol degradation. Its function is as follows. Component of the dihydroxyacetone kinase complex, which is responsible for the phosphoenolpyruvate (PEP)-dependent phosphorylation of dihydroxyacetone. DhaM serves as the phosphoryl donor. Is phosphorylated by phosphoenolpyruvate in an EI- and HPr-dependent reaction, and a phosphorelay system on histidine residues finally leads to phosphoryl transfer to DhaL and dihydroxyacetone. The protein is PTS-dependent dihydroxyacetone kinase, phosphotransferase subunit DhaM of Lactococcus lactis subsp. lactis (strain IL1403) (Streptococcus lactis).